The primary structure comprises 206 residues: Protease (206 aa).

Active-site residues include H54, D71, and C122.

It belongs to the peptidase C5 family. As to quaternary structure, interacts with protease cofactor pVI-C; this interaction is necessary for protease activation.

Its subcellular location is the virion. It localises to the host nucleus. The enzyme catalyses Cleaves proteins of the adenovirus and its host cell at two consensus sites: -Yaa-Xaa-Gly-Gly-|-Xaa- and -Yaa-Xaa-Gly-Xaa-|-Gly- (in which Yaa is Met, Ile or Leu, and Xaa is any amino acid).. Requires DNA and protease cofactor for maximal activation. Inside nascent virions, becomes partially activated by binding to the viral DNA, allowing it to cleave the cofactor that binds to the protease and fully activates it. Actin, like the viral protease cofactor, seems to act as a cofactor in the cleavage of cytokeratin 18 and of actin itself. Its function is as follows. Cleaves viral precursor proteins (pTP, pIIIa, pVI, pVII, pVIII, and pX) inside newly assembled particles giving rise to mature virions. Protease complexed to its cofactor slides along the viral DNA to specifically locate and cleave the viral precursors. Mature virions have a weakened organization compared to the unmature virions, thereby facilitating subsequent uncoating. Without maturation, the particle lacks infectivity and is unable to uncoat. Late in adenovirus infection, in the cytoplasm, may participate in the cytoskeleton destruction. Cleaves host cell cytoskeletal keratins K7 and K18. The protein is Protease of Homo sapiens (Human).